We begin with the raw amino-acid sequence, 507 residues long: MDVPAFRERLLRLAPKDPLVLAVSGGGDSVALALLVKEAGRQAVVAHLDHGLRPESPLDQAFVRALAERLGFPFFTERVEVARIAQARGENLEAVAREVRYAFLHRVAREVGARAILTAHTLDDQAETVLLQLLQGTARATGIREREGIVVRPLLAHTREELRAYLRARGEAWREDPTNQDPALDRNFLRLFVFPLLEERFPAAKRALARFAEARAEEEGVLERQAEARLLPDPRFFVPAFRAAPLLEAPLAVRRRALRRLLEKLGLRPEARLVLLLEEALRGRPQTLPGGVLARRKGGTLFLLPPRPRLPLPPGFRRPAPGDYLERPSGRKRLVDFLAEKGVPRELKPLWPVRAEGSRVVEVLGLYPPPPEEAHMAEALAEAASAFREGEVPVGAVLVLPGRVLRAHNRVEGLRDPTAHAEMLLLREAGPEARGGRLYVTLEPCLMCHHALAQAGVEVVYGAENLKEGALTRFGLPTRARGGVRERECAKLLRDFFARLREGCRSG.

24–29 (SGGGDS) serves as a coordination point for ATP. The CMP/dCMP-type deaminase domain occupies 370–500 (PPEEAHMAEA…KLLRDFFARL (131 aa)). Histidine 420, cysteine 445, and cysteine 448 together coordinate Zn(2+).

This sequence belongs to the tRNA(Ile)-lysidine synthase family.

It is found in the cytoplasm. The catalysed reaction is cytidine(34) in tRNA(Ile2) + L-lysine + ATP = lysidine(34) in tRNA(Ile2) + AMP + diphosphate + H(+). Functionally, ligates lysine onto the cytidine present at position 34 of the AUA codon-specific tRNA(Ile) that contains the anticodon CAU, in an ATP-dependent manner. Cytidine is converted to lysidine, thus changing the amino acid specificity of the tRNA from methionine to isoleucine. The chain is tRNA(Ile)-lysidine synthase (tilS) from Thermus thermophilus (strain ATCC BAA-163 / DSM 7039 / HB27).